Consider the following 149-residue polypeptide: Alpha-crystallin A chain (149 aa).

In terms of domain architecture, sHSP spans 28–138 (LLRGFMDSGI…SHSERPIPVS (111 aa)). Residues His-55, His-76, Glu-78, His-83, His-91, and His-130 each contribute to the Zn(2+) site. The disordered stretch occupies residues 125-149 (NLVSSHSERPIPVSREEKPTSAPSS). The segment covering 130–143 (HSERPIPVSREEKP) has biased composition (basic and acidic residues). Ser-138 carries an O-linked (GlcNAc) serine glycan.

The protein belongs to the small heat shock protein (HSP20) family. Heteropolymer composed of three CRYAA and one CRYAB subunits. Inter-subunit bridging via zinc ions enhances stability, which is crucial as there is no protein turn over in the lens. Can also form homodimers and homotetramers (dimers of dimers) which serve as the building blocks of homooligomers. Within homooligomers, the zinc-binding motif is created from residues of 3 different molecules. His-76 and Glu-78 from one molecule are ligands of the zinc ion, and His-83 and His-130 residues from additional molecules complete the site with tetrahedral coordination geometry.

It localises to the cytoplasm. The protein localises to the nucleus. Contributes to the transparency and refractive index of the lens. May act as a chaperone, preventing aggregation of various proteins under a wide range of stress conditions. This chain is Alpha-crystallin A chain (CRYAA), found in Rana temporaria (European common frog).